We begin with the raw amino-acid sequence, 570 residues long: Sulfite reductase [NADPH] hemoprotein beta-component (570 aa).

Residues Cys-433, Cys-439, Cys-478, and Cys-482 each contribute to the [4Fe-4S] cluster site. Residue Cys-482 coordinates siroheme.

This sequence belongs to the nitrite and sulfite reductase 4Fe-4S domain family. In terms of assembly, alpha(8)-beta(8). The alpha component is a flavoprotein, the beta component is a hemoprotein. Siroheme is required as a cofactor. Requires [4Fe-4S] cluster as cofactor.

The enzyme catalyses hydrogen sulfide + 3 NADP(+) + 3 H2O = sulfite + 3 NADPH + 4 H(+). It functions in the pathway sulfur metabolism; hydrogen sulfide biosynthesis; hydrogen sulfide from sulfite (NADPH route): step 1/1. Component of the sulfite reductase complex that catalyzes the 6-electron reduction of sulfite to sulfide. This is one of several activities required for the biosynthesis of L-cysteine from sulfate. The protein is Sulfite reductase [NADPH] hemoprotein beta-component of Aeromonas hydrophila subsp. hydrophila (strain ATCC 7966 / DSM 30187 / BCRC 13018 / CCUG 14551 / JCM 1027 / KCTC 2358 / NCIMB 9240 / NCTC 8049).